The primary structure comprises 181 residues: Adenylate kinase (181 aa).

An ATP-binding site is contributed by 10–15 (GAGKGT). The NMP stretch occupies residues 30–59 (STGDLFRANIGEGTPLGKEAKSYIDAGKLV). AMP-binding positions include threonine 31, arginine 36, 57 to 59 (KLV), 85 to 88 (GFPR), and glutamine 92. An LID region spans residues 126 to 132 (ARGRADD). Residue arginine 127 coordinates ATP. Residues arginine 129 and arginine 140 each coordinate AMP. An ATP-binding site is contributed by glycine 166.

It belongs to the adenylate kinase family. As to quaternary structure, monomer.

The protein localises to the cytoplasm. It catalyses the reaction AMP + ATP = 2 ADP. The protein operates within purine metabolism; AMP biosynthesis via salvage pathway; AMP from ADP: step 1/1. In terms of biological role, catalyzes the reversible transfer of the terminal phosphate group between ATP and AMP. Plays an important role in cellular energy homeostasis and in adenine nucleotide metabolism. The chain is Adenylate kinase from Corynebacterium diphtheriae (strain ATCC 700971 / NCTC 13129 / Biotype gravis).